A 336-amino-acid polypeptide reads, in one-letter code: Biotin synthase (336 aa).

Positions 54-281 (NAIQLSTLLS…KAMVRLSAGR (228 aa)) constitute a Radical SAM core domain. Residues C69, C73, and C76 each contribute to the [4Fe-4S] cluster site. [2Fe-2S] cluster is bound by residues C113, C144, C204, and R276.

The protein belongs to the radical SAM superfamily. Biotin synthase family. Homodimer. [4Fe-4S] cluster serves as cofactor. [2Fe-2S] cluster is required as a cofactor.

It catalyses the reaction (4R,5S)-dethiobiotin + (sulfur carrier)-SH + 2 reduced [2Fe-2S]-[ferredoxin] + 2 S-adenosyl-L-methionine = (sulfur carrier)-H + biotin + 2 5'-deoxyadenosine + 2 L-methionine + 2 oxidized [2Fe-2S]-[ferredoxin]. It functions in the pathway cofactor biosynthesis; biotin biosynthesis; biotin from 7,8-diaminononanoate: step 2/2. Catalyzes the conversion of dethiobiotin (DTB) to biotin by the insertion of a sulfur atom into dethiobiotin via a radical-based mechanism. The protein is Biotin synthase of Burkholderia mallei (strain ATCC 23344).